Consider the following 1360-residue polypeptide: Ubiquitin carboxyl-terminal hydrolase 19 (1360 aa).

The disordered stretch occupies residues 1–46 (MSAGASATGPRRGPPGLEEATSKKKQKDRANLESKDGDARRVSLPR). The Cytoplasmic portion of the chain corresponds to 1 to 1333 (MSAGASATGP…TTPDEGCLRY (1333 aa)). The segment covering 28 to 46 (DRANLESKDGDARRVSLPR) has biased composition (basic and acidic residues). In terms of domain architecture, CS 1 spans 51–140 (KDELLLDWRQ…VPLLTWPSLL (90 aa)). The disordered stretch occupies residues 163 to 239 (PIALEPGSEP…APSFLSDSAT (77 aa)). Residues 170 to 181 (SEPRRAKQEARN) show a composition bias toward basic and acidic residues. Positions 189–199 (GEVGSGAGPGT) are enriched in gly residues. Ser220 is subject to Phosphoserine. Residues 322 to 424 (LAFVKNDSYE…RQSQRWGGLE (103 aa)) form the CS 2 domain. Positions 432 to 482 (VGGAKVAVPTGPTPLDSTPPGGGPHPLTGQEEARAVEKEKPKARSEDSGLD) are disordered. Residues 462 to 478 (EEARAVEKEKPKARSED) are compositionally biased toward basic and acidic residues. One can recognise a USP domain in the interval 539–1256 (TGLVNLGNTC…YAYVLFYRRR (718 aa)). Cys548 serves as the catalytic Nucleophile. Zn(2+)-binding residues include Cys833, Cys836, Cys850, Cys853, Cys859, Cys863, His871, and Cys875. The MYND-type zinc finger occupies 833–875 (CAACQRKQQSEEEKLKRCTRCYRVGYCNQFCQKTHWPDHKGLC). Positions 965–988 (DTGAHRVWPPADRGPVPSTSGLSS) are disordered. His1207 acts as the Proton acceptor in catalysis. Basic and acidic residues predominate over residues 1259–1274 (PVERPPRASHSEHHPD). Residues 1259–1281 (PVERPPRASHSEHHPDLGPAAEA) form a disordered region. A helical membrane pass occupies residues 1334–1354 (FVLGTVAALVALVLNVFYPLV). Residues 1355-1360 (SQSRWR) lie on the Lumenal side of the membrane.

In terms of assembly, interacts with RNF123. Interacts with BIRC2/c-IAP1, BIRC3/c-IAP2 and XIAP/BIRC4. Interacts with HIF1A (via N-terminus).

It is found in the endoplasmic reticulum membrane. The enzyme catalyses Thiol-dependent hydrolysis of ester, thioester, amide, peptide and isopeptide bonds formed by the C-terminal Gly of ubiquitin (a 76-residue protein attached to proteins as an intracellular targeting signal).. Deubiquitinating enzyme that regulates the degradation of various proteins by removing ubiquitin moieties, thereby preventing their proteasomal degradation. Stabilizes RNF123, which promotes CDKN1B degradation and contributes to cell proliferation. Decreases the levels of ubiquitinated proteins during skeletal muscle formation and acts to repress myogenesis. Modulates transcription of major myofibrillar proteins. Also involved in turnover of endoplasmic-reticulum-associated degradation (ERAD) substrates. Mechanistically, deubiquitinates and thereby stabilizes several E3 ligases involved in the ERAD pathway including SYVN1 or MARCHF6. Regulates the stability of other E3 ligases including BIRC2/c-IAP1 and BIRC3/c-IAP2 by preventing their ubiquitination. Required for cells to mount an appropriate response to hypoxia by rescuing HIF1A from degradation in a non-catalytic manner and by mediating the deubiquitination of FUNDC1. Attenuates mitochondrial damage and ferroptosis by targeting and stabilizing NADPH oxidase 4/NOX4. Negatively regulates TNF-alpha- and IL-1beta-triggered NF-kappa-B activation by hydrolyzing 'Lys-27'- and 'Lys-63'-linked polyubiquitin chains from MAP3K7. Modulates also the protein level and aggregation of polyQ-expanded huntingtin/HTT through HSP90AA1. The chain is Ubiquitin carboxyl-terminal hydrolase 19 (Usp19) from Mus musculus (Mouse).